Consider the following 347-residue polypeptide: Tryptophan--tRNA ligase (347 aa).

Residues glutamine 10–serine 12 and glycine 18–asparagine 19 contribute to the ATP site. Residues alanine 11–asparagine 19 carry the 'HIGH' region motif. Aspartate 140 contacts L-tryptophan. Residues glycine 152–aspartate 154, isoleucine 191, and lysine 200–serine 204 contribute to the ATP site. Residues lysine 200–serine 204 carry the 'KMSKS' region motif.

Belongs to the class-I aminoacyl-tRNA synthetase family. As to quaternary structure, homodimer.

It localises to the cytoplasm. It carries out the reaction tRNA(Trp) + L-tryptophan + ATP = L-tryptophyl-tRNA(Trp) + AMP + diphosphate + H(+). Catalyzes the attachment of tryptophan to tRNA(Trp). The protein is Tryptophan--tRNA ligase of Mycoplasma genitalium (strain ATCC 33530 / DSM 19775 / NCTC 10195 / G37) (Mycoplasmoides genitalium).